Reading from the N-terminus, the 119-residue chain is MSKQPRKQRTRTETAPLHERQRAVRATLSDELREEYGQRNVRVNAGDTVEVLRGDDAGHEAEVVTVDLTETVIHVEDVTIEKADGEEVPRPLDSSNLRVTELNLEDSKREARLEEGDEQ.

It belongs to the universal ribosomal protein uL24 family. In terms of assembly, part of the 50S ribosomal subunit.

Its function is as follows. One of two assembly initiator proteins, it binds directly to the 5'-end of the 23S rRNA, where it nucleates assembly of the 50S subunit. Functionally, located at the polypeptide exit tunnel on the outside of the subunit. The sequence is that of Large ribosomal subunit protein uL24 from Haloquadratum walsbyi (strain DSM 16790 / HBSQ001).